A 3413-amino-acid polypeptide reads, in one-letter code: Protein pecanex (3413 aa).

2 helical membrane passes run Val-33 to Phe-53 and Trp-57 to Ala-77. Asn-164 carries an N-linked (GlcNAc...) asparagine glycan. Residues Gly-182–Ser-195 show a composition bias toward low complexity. Disordered stretches follow at residues Gly-182 to Ala-213 and Gly-235 to Leu-314. The span at Val-196 to Ala-213 shows a compositional bias: polar residues. Asn-208 carries N-linked (GlcNAc...) asparagine glycosylation. Low complexity predominate over residues Ala-302–Asn-312. Asn-317 carries N-linked (GlcNAc...) asparagine glycosylation. 4 disordered regions span residues Pro-327 to Pro-363, Leu-379 to His-403, Pro-540 to Gly-609, and Pro-625 to Pro-651. The span at Leu-330–Ser-354 shows a compositional bias: polar residues. Basic and acidic residues predominate over residues Arg-392–Lys-402. Gly residues predominate over residues Gly-541–Ala-559. Asn-569 and Asn-581 each carry an N-linked (GlcNAc...) asparagine glycan. Residues Asn-569–Lys-582 are compositionally biased toward polar residues. The span at Gly-599 to Gly-609 shows a compositional bias: gly residues. Over residues Pro-625–Pro-634 the composition is skewed to polar residues. Residue Asn-685 is glycosylated (N-linked (GlcNAc...) asparagine). A compositionally biased stretch (basic and acidic residues) spans Glu-720–Asp-730. Disordered stretches follow at residues Glu-720–Val-745, His-816–Pro-873, Arg-886–Gln-921, and Lys-1002–Ser-1021. A compositionally biased stretch (basic residues) spans His-816–Ala-826. Residues Ser-828–Gly-846 are compositionally biased toward low complexity. The segment covering Asn-847–Asp-856 has biased composition (acidic residues). A glycan (N-linked (GlcNAc...) asparagine) is linked at Asn-857. The span at Ser-1008–Ser-1021 shows a compositional bias: low complexity. Residues Asn-1010, Asn-1015, Asn-1069, and Asn-1199 are each glycosylated (N-linked (GlcNAc...) asparagine). Transmembrane regions (helical) follow at residues Met-1315–Leu-1335 and Leu-1343–Val-1363. The N-linked (GlcNAc...) asparagine glycan is linked to Asn-1375. A run of 4 helical transmembrane segments spans residues Lys-1376 to Leu-1396, Val-1423 to Ser-1443, Leu-1474 to Pro-1494, and Gly-1504 to Leu-1524. N-linked (GlcNAc...) asparagine glycosylation occurs at Asn-1572. 3 disordered regions span residues Gln-1577–Pro-1675, Asp-1722–Thr-1744, and Ala-1760–Pro-1813. Composition is skewed to basic and acidic residues over residues Arg-1587–Ile-1598 and Thr-1607–Asp-1620. Low complexity predominate over residues Lys-1639–Ser-1666. Over residues Ser-1725–Leu-1738 the composition is skewed to polar residues. 5 repeat units span residues Gly-1776–Thr-1777, Gly-1778–Thr-1779, Gly-1780–Thr-1781, Gly-1782–Thr-1783, and Gly-1784–Thr-1785. A 5 X 2 AA tandem repeats of G-T region spans residues Gly-1776 to Thr-1785. Asn-1791 and Asn-1804 each carry an N-linked (GlcNAc...) asparagine glycan. Residues Gly-1799 to Asn-1808 are compositionally biased toward low complexity. The next 5 membrane-spanning stretches (helical) occupy residues Leu-1830–Thr-1850, Leu-1856–Pro-1876, Leu-1914–Ser-1934, Gln-1940–Leu-1960, and Ile-1976–Ile-1996. The interval Ser-2344–Thr-2463 is disordered. The segment covering Gly-2346–Ala-2370 has biased composition (low complexity). Asn-2380 and Asn-2387 each carry an N-linked (GlcNAc...) asparagine glycan. The segment covering Ser-2389–Arg-2411 has biased composition (low complexity). Residues Gly-2437–Asp-2447 show a composition bias toward gly residues. Over residues Gln-2449 to Thr-2463 the composition is skewed to polar residues. Residues Asn-2458, Asn-2619, and Asn-2717 are each glycosylated (N-linked (GlcNAc...) asparagine). Disordered regions lie at residues Leu-2908–Ser-2997 and Glu-3198–Gly-3242. Residues Arg-2940–Ala-2956 are compositionally biased toward basic and acidic residues. Asn-3246 is a glycosylation site (N-linked (GlcNAc...) asparagine). The tract at residues Ala-3295 to Val-3413 is disordered. Residues Glu-3310 to Glu-3323 show a composition bias toward acidic residues. Over residues Thr-3364–Ser-3377 the composition is skewed to low complexity. Residues Gln-3380–Glu-3406 are compositionally biased toward acidic residues.

This sequence belongs to the pecanex family.

Its subcellular location is the membrane. Its function is as follows. Involved in neurogenesis. This is Protein pecanex (pcx) from Drosophila melanogaster (Fruit fly).